A 996-amino-acid chain; its full sequence is NACHT, LRR and PYD domains-containing protein 9 (996 aa).

One can recognise a Pyrin domain in the interval 1–94; it reads MAESFFSDFG…WRKARNEIRQ (94 aa). The NACHT domain maps to 150–469; the sequence is PTVVLHGPEG…FYMFTRPKDP (320 aa). 156–163 provides a ligand contact to ATP; sequence GPEGIGKT. LRR repeat units follow at residues 748-769, 777-798, 805-825, 834-855, 862-883, and 891-914; these read KLNL…VLCE, ALEA…HLSQ, SLTF…TTLC, NLQE…DIAT, KLKT…QLCK, and KLEN…ASAL.

It belongs to the NLRP family. In terms of assembly, sensor component of NLRP9 inflammasomes. Inflammasomes are supramolecular complexes that assemble in the cytosol in response to pathogens, such as rotavirus, and play critical roles in innate immunity and inflammation. The core of NLRP9 inflammasomes consists of a signal sensor component (NLRP9), an adapter (ASC/PYCARD), which recruits an effector pro-inflammatory caspase (CASP1). Within the complex, NLRP9 and PYCARD interact via their respective DAPIN/pyrin domains. This interaction initiates speck formation (nucleation) which greatly enhances further addition of soluble PYCARD molecules to the speck in a prion-like polymerization process. Clustered PYCARD nucleates the formation of CASP1 filaments through the interaction of their respective CARD domains, acting as a platform for CASP1 polymerization. CASP1 filament formation increases local enzyme concentration, resulting in trans-autocleavage and activation. Active CASP1 then processes IL1B and IL18 precursors, leading to the release of mature cytokines in the extracellular milieu and inflammatory response. Interacts with DHX9 upon rotavirus infection; this interaction may trigger inflammasome activation and inflammatory response. Detected exclusively in testis and ovary, and at high level in the oocyte from antral follicles.

Its subcellular location is the cytoplasm. The protein localises to the inflammasome. As the sensor component of the NLRP9 inflammasome, plays a crucial role in innate immunity and inflammation. In response to pathogens, including rotavirus, initiates the formation of the inflammasome polymeric complex, made of NLRP9, PYCARD and CASP1. Recruitment of proCASP1 to the inflammasome promotes its activation and CASP1-catalyzed IL1B and IL18 maturation and release in the extracellular milieu. The active cytokines stimulate inflammatory responses. Inflammasomes can also induce pyroptosis, an inflammatory form of programmed cell death. NLRP9 inflammasome activation may be initiated by DHX9 interaction with viral double-stranded RNA (dsRNA), preferentially to short dsRNA segments. This chain is NACHT, LRR and PYD domains-containing protein 9 (NLRP9), found in Bos taurus (Bovine).